The chain runs to 497 residues: Glycerol kinase (497 aa).

Position 21 (Thr-21) interacts with ADP. ATP-binding residues include Thr-21 and Thr-22. Thr-21 serves as a coordination point for sn-glycerol 3-phosphate. Arg-25 contacts ADP. Sn-glycerol 3-phosphate is bound by residues Arg-88, Glu-89, Tyr-140, and Asp-244. Glycerol-binding residues include Arg-88, Glu-89, Tyr-140, Asp-244, and Gln-245. Residues Thr-266 and Gly-309 each coordinate ADP. Positions 266, 309, 313, and 410 each coordinate ATP. Residues Gly-410 and Asn-414 each coordinate ADP.

Belongs to the FGGY kinase family.

The catalysed reaction is glycerol + ATP = sn-glycerol 3-phosphate + ADP + H(+). The protein operates within polyol metabolism; glycerol degradation via glycerol kinase pathway; sn-glycerol 3-phosphate from glycerol: step 1/1. Inhibited by fructose 1,6-bisphosphate (FBP). Its function is as follows. Key enzyme in the regulation of glycerol uptake and metabolism. Catalyzes the phosphorylation of glycerol to yield sn-glycerol 3-phosphate. This is Glycerol kinase from Gloeobacter violaceus (strain ATCC 29082 / PCC 7421).